We begin with the raw amino-acid sequence, 272 residues long: SKA complex subunit 1 homolog (272 aa).

The stretch at 48–75 (ALSSMELQVQSIKDRLREETEAIPKAKK) forms a coiled coil.

This sequence belongs to the SKA1 family.

The protein is SKA complex subunit 1 homolog of Arabidopsis thaliana (Mouse-ear cress).